Reading from the N-terminus, the 500-residue chain is Cytochrome P450 726A27 (500 aa).

Residues 7 to 27 (IPSYPIIFSFFIFIFMLIKIW) traverse the membrane as a helical; Signal-anchor for type II membrane protein segment. C440 serves as a coordination point for heme.

This sequence belongs to the cytochrome P450 family. The cofactor is heme. As to expression, expressed in mature seeds.

Its subcellular location is the membrane. The catalysed reaction is (-)-casbene + reduced [NADPH--hemoprotein reductase] + O2 = 4-hydroxycasbene + oxidized [NADPH--hemoprotein reductase] + H2O + H(+). It catalyses the reaction 8-hydroxycasbene + reduced [NADPH--hemoprotein reductase] + O2 = 4,8-dihydroxycasbene + oxidized [NADPH--hemoprotein reductase] + H2O + H(+). The enzyme catalyses 4,8-dihydroxycasbene + reduced [NADPH--hemoprotein reductase] + O2 = 4,5,8-trihydroxycasbene + oxidized [NADPH--hemoprotein reductase] + H2O + H(+). The protein operates within secondary metabolite biosynthesis; terpenoid biosynthesis. Involved in the biosynthesis of macrocyclic lathyrane type diterpenoids (also called Euphorbia factors) natural products, including the cyclization route from casbene to jolkinol C, a precursor for ingenol mebutate that is used to treat actinic keratosis, a precancerous skin condition. Catalyzes the hydroxylation of (-)-casbene and 8-hydroxycasbene to produce 4-hydroxycasbene and 4,8-dihydroxycasbene, respectively. The sequence is that of Cytochrome P450 726A27 from Euphorbia lathyris (Caper spurge).